We begin with the raw amino-acid sequence, 545 residues long: Chaperonin GroEL 1 (545 aa).

ATP is bound by residues 30 to 33 (TLGP), lysine 51, 87 to 91 (DGTTT), glycine 415, and aspartate 496.

The protein belongs to the chaperonin (HSP60) family. As to quaternary structure, forms a cylinder of 14 subunits composed of two heptameric rings stacked back-to-back. Interacts with the co-chaperonin GroES.

The protein resides in the cytoplasm. It catalyses the reaction ATP + H2O + a folded polypeptide = ADP + phosphate + an unfolded polypeptide.. Together with its co-chaperonin GroES, plays an essential role in assisting protein folding. The GroEL-GroES system forms a nano-cage that allows encapsulation of the non-native substrate proteins and provides a physical environment optimized to promote and accelerate protein folding. This Nitrobacter hamburgensis (strain DSM 10229 / NCIMB 13809 / X14) protein is Chaperonin GroEL 1.